The chain runs to 487 residues: Acetyl-coenzyme A carboxylase carboxyl transferase subunit beta, chloroplastic (487 aa).

The interval 180–201 (SRNSSENEGSSKRTRTKGSDLT) is disordered. The CoA carboxyltransferase N-terminal domain occupies 218–487 (LWVQCENCYG…PLNQKSSKIK (270 aa)). Residues Cys-222, Cys-225, Cys-241, and Cys-244 each contribute to the Zn(2+) site. A C4-type zinc finger spans residues 222-244 (CENCYGLNYKKFLKSKMNICEQC).

The protein belongs to the AccD/PCCB family. As to quaternary structure, acetyl-CoA carboxylase is a heterohexamer composed of biotin carboxyl carrier protein, biotin carboxylase and 2 subunits each of ACCase subunit alpha and ACCase plastid-coded subunit beta (accD). It depends on Zn(2+) as a cofactor.

It is found in the plastid. It localises to the chloroplast stroma. It catalyses the reaction N(6)-carboxybiotinyl-L-lysyl-[protein] + acetyl-CoA = N(6)-biotinyl-L-lysyl-[protein] + malonyl-CoA. It participates in lipid metabolism; malonyl-CoA biosynthesis; malonyl-CoA from acetyl-CoA: step 1/1. Component of the acetyl coenzyme A carboxylase (ACC) complex. Biotin carboxylase (BC) catalyzes the carboxylation of biotin on its carrier protein (BCCP) and then the CO(2) group is transferred by the transcarboxylase to acetyl-CoA to form malonyl-CoA. This Atropa belladonna (Belladonna) protein is Acetyl-coenzyme A carboxylase carboxyl transferase subunit beta, chloroplastic.